Reading from the N-terminus, the 425-residue chain is Xyloglucan O-acetyltransferase 2 (425 aa).

Residues 1-18 (MGSPFKDHHTLHPSLVRK) are Cytoplasmic-facing. A helical; Signal-anchor for type II membrane protein membrane pass occupies residues 19 to 38 (LIPWTFYAMVPLVLFRVYLY). Residues 39 to 425 (PYPLHHTTTT…KWEYASRREQ (387 aa)) lie on the Lumenal side of the membrane. 4 cysteine pairs are disulfide-bonded: cysteine 68–cysteine 118, cysteine 89–cysteine 154, cysteine 98–cysteine 398, and cysteine 313–cysteine 394. The N-linked (GlcNAc...) asparagine glycan is linked to asparagine 85. Residues 141–143 (GDS) carry the GDS motif motif. Serine 143 (nucleophile) is an active-site residue. Asparagine 183 and asparagine 259 each carry an N-linked (GlcNAc...) asparagine glycan. Aspartate 393 functions as the Proton donor in the catalytic mechanism. The DXXH motif signature appears at 393-396 (DCVH). Histidine 396 serves as the catalytic Proton acceptor.

The protein belongs to the PC-esterase family. TBL subfamily.

The protein localises to the golgi apparatus membrane. In terms of biological role, xyloglucan acetyltransferase that catalyzes the acetylation of fucosylated Gal residues on xyloglucan side chains. Predominantly catalyze 6-O-monoacetylation of Gal residues in the Fuc-Gal-Xyl trisaccharide side chains of xyloglucan oligomers. The polypeptide is Xyloglucan O-acetyltransferase 2 (Populus trichocarpa (Western balsam poplar)).